The sequence spans 78 residues: MALIRKTFYFVFAVFFILVQQPSGCQAGLEFSEPFPSGRFAVCESCKLGRGKCRKECLENEKPDGSCRLNFLCCRPRM.

Residues 1 to 27 form the signal peptide; the sequence is MALIRKTFYFVFAVFFILVQQPSGCQA. Cystine bridges form between Cys43-Cys74, Cys53-Cys67, and Cys57-Cys73.

This sequence belongs to the beta-defensin family.

The protein resides in the secreted. Functionally, has antimicrobial activity. The chain is Beta-defensin 105A (DEFB105A) from Macaca fascicularis (Crab-eating macaque).